A 625-amino-acid chain; its full sequence is tRNA uridine 5-carboxymethylaminomethyl modification enzyme MnmG (625 aa).

14-19 contacts FAD; sequence GAGHAG. NAD(+) is bound at residue 273-287; it reads GPRYCPSIEDKIVRF.

This sequence belongs to the MnmG family. As to quaternary structure, homodimer. Heterotetramer of two MnmE and two MnmG subunits. FAD is required as a cofactor.

It is found in the cytoplasm. In terms of biological role, NAD-binding protein involved in the addition of a carboxymethylaminomethyl (cmnm) group at the wobble position (U34) of certain tRNAs, forming tRNA-cmnm(5)s(2)U34. This is tRNA uridine 5-carboxymethylaminomethyl modification enzyme MnmG from Clostridium botulinum (strain Hall / ATCC 3502 / NCTC 13319 / Type A).